Consider the following 557-residue polypeptide: Dihydroxy-acid dehydratase (557 aa).

Residue Cys-49 coordinates [2Fe-2S] cluster. Asp-81 serves as a coordination point for Mg(2+). Cys-122 is a [2Fe-2S] cluster binding site. Positions 123 and 124 each coordinate Mg(2+). Lys-124 bears the N6-carboxylysine mark. Cys-194 contributes to the [2Fe-2S] cluster binding site. Glu-446 provides a ligand contact to Mg(2+). Ser-472 functions as the Proton acceptor in the catalytic mechanism.

This sequence belongs to the IlvD/Edd family. As to quaternary structure, homodimer. It depends on [2Fe-2S] cluster as a cofactor. The cofactor is Mg(2+).

The catalysed reaction is (2R)-2,3-dihydroxy-3-methylbutanoate = 3-methyl-2-oxobutanoate + H2O. The enzyme catalyses (2R,3R)-2,3-dihydroxy-3-methylpentanoate = (S)-3-methyl-2-oxopentanoate + H2O. The protein operates within amino-acid biosynthesis; L-isoleucine biosynthesis; L-isoleucine from 2-oxobutanoate: step 3/4. Its pathway is amino-acid biosynthesis; L-valine biosynthesis; L-valine from pyruvate: step 3/4. Functions in the biosynthesis of branched-chain amino acids. Catalyzes the dehydration of (2R,3R)-2,3-dihydroxy-3-methylpentanoate (2,3-dihydroxy-3-methylvalerate) into 2-oxo-3-methylpentanoate (2-oxo-3-methylvalerate) and of (2R)-2,3-dihydroxy-3-methylbutanoate (2,3-dihydroxyisovalerate) into 2-oxo-3-methylbutanoate (2-oxoisovalerate), the penultimate precursor to L-isoleucine and L-valine, respectively. The sequence is that of Dihydroxy-acid dehydratase from Prochlorococcus marinus (strain MIT 9215).